We begin with the raw amino-acid sequence, 222 residues long: MSAVINKEVLLSKIKEALRNGKPRRFRQSVELIVVLRDVDLNKPENRINLLVELPHPPKPNKVAAFAHGAFETQAKNAGVDAIITRDQIESLAGNKRAIRKLAKQYDFFIAPPDLMPLLGRVIGPIFGPRGKMPEVAPPNVDIKALVERLKRSVRVRLRNEAVVKVRVGSETQKPEEILENILVILEELNRRFPLRQHLRGIYIKKTMGPPVVARALEVLVR.

The protein belongs to the universal ribosomal protein uL1 family. Part of the 50S ribosomal subunit.

Binds directly to 23S rRNA. Probably involved in E site tRNA release. In terms of biological role, protein L1 is also a translational repressor protein, it controls the translation of its operon by binding to its mRNA. The polypeptide is Large ribosomal subunit protein uL1 (Pyrobaculum islandicum (strain DSM 4184 / JCM 9189 / GEO3)).